Consider the following 466-residue polypeptide: 3-isopropylmalate dehydratase large subunit (466 aa).

Residues Cys347, Cys407, and Cys410 each contribute to the [4Fe-4S] cluster site.

The protein belongs to the aconitase/IPM isomerase family. LeuC type 1 subfamily. In terms of assembly, heterodimer of LeuC and LeuD. The cofactor is [4Fe-4S] cluster.

The catalysed reaction is (2R,3S)-3-isopropylmalate = (2S)-2-isopropylmalate. It functions in the pathway amino-acid biosynthesis; L-leucine biosynthesis; L-leucine from 3-methyl-2-oxobutanoate: step 2/4. In terms of biological role, catalyzes the isomerization between 2-isopropylmalate and 3-isopropylmalate, via the formation of 2-isopropylmaleate. The protein is 3-isopropylmalate dehydratase large subunit of Pectobacterium atrosepticum (strain SCRI 1043 / ATCC BAA-672) (Erwinia carotovora subsp. atroseptica).